Here is a 144-residue protein sequence, read N- to C-terminus: MKSYLAKENEVQRKWYVIDVEGKPLGRAASQVATILRGKNKPTYTPNVDTGDYVIILNAEKVALTGKKLDQKMLRHHSLYPGGLKEISYKKALESKPEFVFQEAVRRMLPQGPLGRKMLKKLKVYRGSEHNQEAQKPEVLELRY.

Belongs to the universal ribosomal protein uL13 family. Part of the 50S ribosomal subunit.

This protein is one of the early assembly proteins of the 50S ribosomal subunit, although it is not seen to bind rRNA by itself. It is important during the early stages of 50S assembly. In Clostridium novyi (strain NT), this protein is Large ribosomal subunit protein uL13.